We begin with the raw amino-acid sequence, 197 residues long: UPF0301 protein A2cp1_4106 (197 aa).

The protein belongs to the UPF0301 (AlgH) family.

In Anaeromyxobacter dehalogenans (strain 2CP-1 / ATCC BAA-258), this protein is UPF0301 protein A2cp1_4106.